The chain runs to 462 residues: Dipeptidyl peptidase 1 (462 aa).

The N-terminal stretch at 1–24 (MGPWTHSLRAVLLLVLLGVCTVRS) is a signal peptide. Asparagine 29 and asparagine 53 each carry an N-linked (GlcNAc...) asparagine glycan. 5 disulfides stabilise this stretch: cysteine 30-cysteine 118, cysteine 54-cysteine 136, cysteine 254-cysteine 297, cysteine 290-cysteine 330, and cysteine 320-cysteine 336. Positions 135-230 (ACFVGKKVES…DEIQQQILNL (96 aa)) are excised as a propeptide. The active site involves cysteine 257. N-linked (GlcNAc...) asparagine glycosylation is present at asparagine 275. Residues phenylalanine 301 and tyrosine 303 each contribute to the chloride site. Residue tyrosine 346 participates in chloride binding. Residues histidine 404 and asparagine 426 contribute to the active site.

It belongs to the peptidase C1 family. Tetramer of heterotrimers consisting of exclusion domain, heavy- and light chains. Requires chloride as cofactor. As to expression, broadly distributed, but higher levels found in lung, liver, kidney and spleen. Lower levels found in testis and brain.

It localises to the lysosome. It carries out the reaction Release of an N-terminal dipeptide, Xaa-Yaa-|-Zaa-, except when Xaa is Arg or Lys, or Yaa or Zaa is Pro.. Functionally, thiol protease. Has dipeptidylpeptidase activity. Active against a broad range of dipeptide substrates composed of both polar and hydrophobic amino acids. Proline cannot occupy the P1 position and arginine cannot occupy the P2 position of the substrate. Can act as both an exopeptidase and endopeptidase. Activates serine proteases such as elastase, cathepsin G and granzymes A and B. The protein is Dipeptidyl peptidase 1 (Ctsc) of Mus musculus (Mouse).